Reading from the N-terminus, the 283-residue chain is Aspartate dehydrogenase domain-containing protein (283 aa).

Ser-20 and Ser-168 each carry phosphoserine.

It belongs to the L-aspartate dehydrogenase family.

This is Aspartate dehydrogenase domain-containing protein from Homo sapiens (Human).